The sequence spans 91 residues: Putative regulatory protein Cphy_2880 (91 aa).

It belongs to the RemA family.

In Lachnoclostridium phytofermentans (strain ATCC 700394 / DSM 18823 / ISDg) (Clostridium phytofermentans), this protein is Putative regulatory protein Cphy_2880.